Consider the following 184-residue polypeptide: Photosystem I assembly protein Ycf4 (184 aa).

The next 2 membrane-spanning stretches (helical) occupy residues 22–42 (FCWA…GTSS) and 57–77 (ILFF…LFIS).

It belongs to the Ycf4 family.

Its subcellular location is the plastid. The protein resides in the chloroplast thylakoid membrane. Functionally, seems to be required for the assembly of the photosystem I complex. The chain is Photosystem I assembly protein Ycf4 from Panax ginseng (Korean ginseng).